A 92-amino-acid polypeptide reads, in one-letter code: Small ribosomal subunit protein uS19 (92 aa).

This sequence belongs to the universal ribosomal protein uS19 family.

Functionally, protein S19 forms a complex with S13 that binds strongly to the 16S ribosomal RNA. The protein is Small ribosomal subunit protein uS19 of Malacoplasma penetrans (strain HF-2) (Mycoplasma penetrans).